Here is a 231-residue protein sequence, read N- to C-terminus: Ribose-5-phosphate isomerase A (231 aa).

Substrate is bound by residues 28-31 (TGST), 83-86 (DGAD), and 96-99 (KGGG). Glu-105 acts as the Proton acceptor in catalysis. A substrate-binding site is contributed by Lys-123.

This sequence belongs to the ribose 5-phosphate isomerase family. As to quaternary structure, homodimer.

It catalyses the reaction aldehydo-D-ribose 5-phosphate = D-ribulose 5-phosphate. It participates in carbohydrate degradation; pentose phosphate pathway; D-ribose 5-phosphate from D-ribulose 5-phosphate (non-oxidative stage): step 1/1. Catalyzes the reversible conversion of ribose-5-phosphate to ribulose 5-phosphate. The chain is Ribose-5-phosphate isomerase A from Sinorhizobium fredii (strain NBRC 101917 / NGR234).